The sequence spans 215 residues: 3-isopropylmalate dehydratase small subunit (215 aa).

This sequence belongs to the LeuD family. LeuD type 1 subfamily. As to quaternary structure, heterodimer of LeuC and LeuD.

It catalyses the reaction (2R,3S)-3-isopropylmalate = (2S)-2-isopropylmalate. It participates in amino-acid biosynthesis; L-leucine biosynthesis; L-leucine from 3-methyl-2-oxobutanoate: step 2/4. Catalyzes the isomerization between 2-isopropylmalate and 3-isopropylmalate, via the formation of 2-isopropylmaleate. This Xanthomonas campestris pv. campestris (strain 8004) protein is 3-isopropylmalate dehydratase small subunit.